The chain runs to 86 residues: Neuropeptide precursor capa-1 (86 aa).

The signal sequence occupies residues 1 to 19 (MLLWIVATLLIFSLPVSTA).

In terms of tissue distribution, expressed in two pairs of neurons in the anterior part of the nervous system (at protein level).

Its function is as follows. Encodes at least three neuropeptides: two of the periviscerokinin family (APHPSSALLVPYPRV-amide and LYMARV-amide) and one pyrokinin (AFFYTPRI-amide). Functionally, putative ligand for neuromedin U receptor homolog nmur-2. This Caenorhabditis elegans protein is Neuropeptide precursor capa-1.